A 318-amino-acid chain; its full sequence is Probable cell division protein WhiA (318 aa).

Residues 281-314 (SLKELGQMLVPPVGKSGVNHRLRKIEEISKKLKE) constitute a DNA-binding region (H-T-H motif).

Belongs to the WhiA family.

In terms of biological role, involved in cell division and chromosome segregation. This is Probable cell division protein WhiA from Thermoanaerobacter sp. (strain X514).